The chain runs to 387 residues: 4-hydroxy-3-methylbut-2-en-1-yl diphosphate synthase (flavodoxin) (387 aa).

Residues cysteine 272, cysteine 275, cysteine 307, and glutamate 314 each contribute to the [4Fe-4S] cluster site.

This sequence belongs to the IspG family. It depends on [4Fe-4S] cluster as a cofactor.

It carries out the reaction (2E)-4-hydroxy-3-methylbut-2-enyl diphosphate + oxidized [flavodoxin] + H2O + 2 H(+) = 2-C-methyl-D-erythritol 2,4-cyclic diphosphate + reduced [flavodoxin]. It functions in the pathway isoprenoid biosynthesis; isopentenyl diphosphate biosynthesis via DXP pathway; isopentenyl diphosphate from 1-deoxy-D-xylulose 5-phosphate: step 5/6. Its function is as follows. Converts 2C-methyl-D-erythritol 2,4-cyclodiphosphate (ME-2,4cPP) into 1-hydroxy-2-methyl-2-(E)-butenyl 4-diphosphate. This chain is 4-hydroxy-3-methylbut-2-en-1-yl diphosphate synthase (flavodoxin), found in Granulibacter bethesdensis (strain ATCC BAA-1260 / CGDNIH1).